The chain runs to 159 residues: Ribonuclease H (159 aa).

The RNase H type-1 domain maps to 10-153 (TQTQVVIYTD…ADALANQGVE (144 aa)). Mg(2+) is bound by residues Asp-19, Glu-57, Asp-79, and Asp-145.

Belongs to the RNase H family. Monomer. Mg(2+) serves as cofactor.

It is found in the cytoplasm. The enzyme catalyses Endonucleolytic cleavage to 5'-phosphomonoester.. Its function is as follows. Endonuclease that specifically degrades the RNA of RNA-DNA hybrids. The sequence is that of Ribonuclease H from Polaromonas sp. (strain JS666 / ATCC BAA-500).